A 135-amino-acid chain; its full sequence is ATP synthase epsilon chain (135 aa).

It belongs to the ATPase epsilon chain family. In terms of assembly, F-type ATPases have 2 components, CF(1) - the catalytic core - and CF(0) - the membrane proton channel. CF(1) has five subunits: alpha(3), beta(3), gamma(1), delta(1), epsilon(1). CF(0) has three main subunits: a, b and c.

Its subcellular location is the cell inner membrane. Its function is as follows. Produces ATP from ADP in the presence of a proton gradient across the membrane. In Rhodopseudomonas palustris (strain BisB5), this protein is ATP synthase epsilon chain.